We begin with the raw amino-acid sequence, 229 residues long: Large ribosomal subunit protein uL1 (229 aa).

It belongs to the universal ribosomal protein uL1 family. As to quaternary structure, part of the 50S ribosomal subunit.

Binds directly to 23S rRNA. The L1 stalk is quite mobile in the ribosome, and is involved in E site tRNA release. In terms of biological role, protein L1 is also a translational repressor protein, it controls the translation of the L11 operon by binding to its mRNA. In Desulforamulus reducens (strain ATCC BAA-1160 / DSM 100696 / MI-1) (Desulfotomaculum reducens), this protein is Large ribosomal subunit protein uL1.